Consider the following 116-residue polypeptide: Large ribosomal subunit protein uL22c (116 aa).

It belongs to the universal ribosomal protein uL22 family. Part of the 50S ribosomal subunit.

The protein localises to the plastid. Its subcellular location is the chloroplast. Functionally, this protein binds specifically to 23S rRNA. In terms of biological role, the globular domain of the protein is located near the polypeptide exit tunnel on the outside of the subunit, while an extended beta-hairpin is found that lines the wall of the exit tunnel in the center of the 70S ribosome. This chain is Large ribosomal subunit protein uL22c (rpl22), found in Porphyra purpurea (Red seaweed).